The following is a 240-amino-acid chain: Ubiquinone biosynthesis O-methyltransferase (240 aa).

Positions 44, 64, 85, and 129 each coordinate S-adenosyl-L-methionine.

This sequence belongs to the methyltransferase superfamily. UbiG/COQ3 family.

It catalyses the reaction a 3-demethylubiquinol + S-adenosyl-L-methionine = a ubiquinol + S-adenosyl-L-homocysteine + H(+). The enzyme catalyses a 3-(all-trans-polyprenyl)benzene-1,2-diol + S-adenosyl-L-methionine = a 2-methoxy-6-(all-trans-polyprenyl)phenol + S-adenosyl-L-homocysteine + H(+). It functions in the pathway cofactor biosynthesis; ubiquinone biosynthesis. In terms of biological role, O-methyltransferase that catalyzes the 2 O-methylation steps in the ubiquinone biosynthetic pathway. This Escherichia coli O127:H6 (strain E2348/69 / EPEC) protein is Ubiquinone biosynthesis O-methyltransferase.